Here is a 135-residue protein sequence, read N- to C-terminus: Interleukin-4 (135 aa).

An N-terminal signal peptide occupies residues 1–24 (MGLTSQLIPVLVCLLVCTSHFVHG). Disulfide bonds link Cys27/Cys135, Cys48/Cys85, and Cys70/Cys105. N-linked (GlcNAc...) asparagine glycosylation is present at Asn62.

It belongs to the IL-4/IL-13 family.

It localises to the secreted. Its function is as follows. Participates in at least several B-cell activation processes as well as of other cell types. It is a costimulator of DNA-synthesis. It induces the expression of class II MHC molecules on resting B-cells. It enhances both secretion and cell surface expression of IgE and IgG1. It also regulates the expression of the low affinity Fc receptor for IgE (CD23) on both lymphocytes and monocytes. Positively regulates IL31RA expression in macrophages. Stimulates autophagy in dendritic cells by interfering with mTORC1 signaling and through the induction of RUFY4. The protein is Interleukin-4 (IL4) of Bos taurus (Bovine).